The chain runs to 366 residues: Glucose 1-dehydrogenase (366 aa).

Cysteine 39 is a Zn(2+) binding site. Position 41 (threonine 41) interacts with substrate. 2 residues coordinate Zn(2+): histidine 66 and glutamate 67. Asparagine 89 serves as a coordination point for substrate. Zn(2+) is bound by residues cysteine 93, cysteine 96, cysteine 99, and cysteine 107. Substrate-binding residues include glutamate 114, glutamine 150, and aspartate 154. Position 150 (glutamine 150) interacts with Zn(2+). NADP(+) is bound by residues 189–192 (TGPI), 211–213 (NRR), 277–279 (FGF), 305–307 (LVN), and lysine 354. Asparagine 307 is a binding site for substrate.

It belongs to the zinc-containing alcohol dehydrogenase family. Glucose 1-dehydrogenase subfamily. Homotetramer. Requires Zn(2+) as cofactor.

The enzyme catalyses D-glucose + NAD(+) = D-glucono-1,5-lactone + NADH + H(+). It catalyses the reaction D-glucose + NADP(+) = D-glucono-1,5-lactone + NADPH + H(+). The catalysed reaction is D-galactose + NAD(+) = D-galactono-1,4-lactone + NADH + H(+). It carries out the reaction D-galactose + NADP(+) = D-galactono-1,5-lactone + NADPH + H(+). The enzyme catalyses an aldopyranose + NAD(+) = aldono-1,5-lactone + NADH + H(+). It catalyses the reaction an aldopyranose + NADP(+) = aldono-1,5-lactone + NADPH + H(+). Inhibited by EDTA in vitro. Catalyzes the NAD(P)(+)-dependent oxidation of D-glucose to D-gluconate via gluconolactone. Displays broad substrate specificity since it is able to catalyze the oxidation of a number of alternative aldose sugars, such as D-galactose, D-xylose and L-arabinose, to the corresponding glyconate. Can utilize both NAD(+) and NADP(+) as electron acceptor. Physiologically, seems to be involved in the degradation of both glucose and galactose through a non-phosphorylative variant of the Entner-Doudoroff pathway. This is Glucose 1-dehydrogenase from Saccharolobus solfataricus (Sulfolobus solfataricus).